We begin with the raw amino-acid sequence, 1026 residues long: SWI/SNF-related matrix-associated actin-dependent regulator of chromatin subfamily A containing DEAD/H box 1 (1026 aa).

At methionine 1 the chain carries N-acetylmethionine. Residues 1–82 (MNLFNLDRFR…DNERKASISY (82 aa)) form a disordered region. Basic and acidic residues predominate over residues 7–19 (DRFRFEKRNKIEE). Threonine 54 carries the phosphothreonine modification. Position 57 is a phosphoserine (serine 57). Threonine 71 carries the phosphothreonine modification. Residue lysine 77 forms a Glycyl lysine isopeptide (Lys-Gly) (interchain with G-Cter in SUMO2) linkage. Serine 79 carries the phosphoserine modification. Lysine 84 is covalently cross-linked (Glycyl lysine isopeptide (Lys-Gly) (interchain with G-Cter in SUMO2)). Residues serine 124, serine 127, serine 132, serine 146, and serine 152 each carry the phosphoserine modification. The CUE 1 domain maps to 157-199 (LKDAKLQTLKELFPQRSDNDLLKLIESTSTMDGAIAAALLMFG). Disordered stretches follow at residues 203 to 251 (GGPR…NWEK) and 302 to 328 (SQSEVPNGKEVSSRSQNYPKNATKTKL). 2 positions are modified to phosphoserine: serine 211 and serine 214. Phosphotyrosine is present on tyrosine 217. Residues 226–238 (QSIKKTRLDHGEE) show a composition bias toward basic and acidic residues. Phosphoserine is present on residues serine 239 and serine 242. In terms of domain architecture, CUE 2 spans 251–294 (KQESIVLKLQKEFPNFDKQELREVLKEHEWMYTEALESLKVFAE). Residue serine 302 is modified to Phosphoserine. Residues 314–323 (SRSQNYPKNA) are compositionally biased toward polar residues. A Glycyl lysine isopeptide (Lys-Gly) (interchain with G-Cter in SUMO2) cross-link involves residue lysine 335. A disordered region spans residues 354–373 (VVEDSEYDSGSDVGSSLDED). Residue lysine 471 forms a Glycyl lysine isopeptide (Lys-Gly) (interchain with G-Cter in SUMO2) linkage. The region spanning 509–677 (ALVHKHGLNG…MSLLNFVMPH (169 aa)) is the Helicase ATP-binding domain. 521 to 529 (ADEMGLGKT) serves as a coordination point for ATP. The DEGH box signature appears at 628 to 631 (DEGH). The short motif at 721-738 (RRVKEEVLKQLPPKKDRI) is the Nuclear localization signal element. A Glycyl lysine isopeptide (Lys-Gly) (interchain with G-Cter in SUMO2) cross-link involves residue lysine 724. The 153-residue stretch at 858-1010 (VLGCILSELK…MTTVDEGDEG (153 aa)) folds into the Helicase C-terminal domain. 897 to 904 (YLRLDGKT) provides a ligand contact to ATP. A Glycyl lysine isopeptide (Lys-Gly) (interchain with G-Cter in SUMO2) cross-link involves residue lysine 996. The DEGD box motif lies at 1005-1008 (DEGD).

This sequence belongs to the SNF2/RAD54 helicase family. As to quaternary structure, binds to DNA preferentially in the vicinity of transcriptional start sites. Interacts with MSH2 and TRIM28. Part of a complex composed of TRIM28, HDAC1, HDAC2 and EHMT2. Interacts with PCNA. In terms of tissue distribution, isoform 1 is expressed ubiquitously. Isoform 3 is expressed mainly in skin and esophagus. Expressed in fibroblasts and keratinocytes (at protein level).

The protein resides in the nucleus. Its subcellular location is the chromosome. The catalysed reaction is ATP + H2O = ADP + phosphate + H(+). Functionally, DNA helicase that possesses intrinsic ATP-dependent nucleosome-remodeling activity and is both required for DNA repair and heterochromatin organization. Promotes DNA end resection of double-strand breaks (DSBs) following DNA damage: probably acts by weakening histone DNA interactions in nucleosomes flanking DSBs. Required for the restoration of heterochromatin organization after replication. Acts at replication sites to facilitate the maintenance of heterochromatin by directing H3 and H4 histones deacetylation, H3 'Lys-9' trimethylation (H3K9me3) and restoration of silencing. The chain is SWI/SNF-related matrix-associated actin-dependent regulator of chromatin subfamily A containing DEAD/H box 1 from Homo sapiens (Human).